The following is a 506-amino-acid chain: Aldehyde dehydrogenase [NAD(P)+] 2 (506 aa).

The Proton acceptor role is filled by E268. Residue C302 is the Nucleophile of the active site.

It belongs to the aldehyde dehydrogenase family.

Its subcellular location is the cytoplasm. The catalysed reaction is an aldehyde + NAD(+) + H2O = a carboxylate + NADH + 2 H(+). The enzyme catalyses 3-aminopropanal + NAD(+) + H2O = beta-alanine + NADH + 2 H(+). Cytoplasmic aldehyde dehydrogenase involved in ethanol oxidation. Involved in pantothenic acid production through the conversion of 3-aminopropanal to beta-alanine, an intermediate in pantothenic acid (vitamin B5) and coenzyme A (CoA) biosynthesis. The sequence is that of Aldehyde dehydrogenase [NAD(P)+] 2 (ALD3) from Saccharomyces cerevisiae (strain ATCC 204508 / S288c) (Baker's yeast).